A 369-amino-acid chain; its full sequence is MLTDHTIKFNKLLTPFSFLYGIGVRFRNQLFDWKVLRTERYDLPIICVGNLTVGGTGKTPHTEYIIRLIKDRYRVAVLSRGYKRKTSGFLLADQRSTSKDIGDEPYQMKRKFPDILVAVDADRRRGIRNLLALPENKRPDVIVLDDAFQHRYVAPTLNILLTDCHRLYTQDRLLPAGRLREPMDGARRADVIIVTKCESCIQPIDFRIIEEDIHLSAYQELYFSRILYGELEPVFSGKAPRRTLKGLASTTEVLLVSGIASPAPLEKEIHKYTEHVTSLIFPDHHAFDRHDIQKIQTAFKRLTSTSKLIIITEKDAARLRDLPSLPMEWFSHLYCLPITVGFCMDREKQFQELIVKHIDTRIKNHPILR.

52–59 provides a ligand contact to ATP; that stretch reads TVGGTGKT.

Belongs to the LpxK family.

The enzyme catalyses a lipid A disaccharide + ATP = a lipid IVA + ADP + H(+). It functions in the pathway glycolipid biosynthesis; lipid IV(A) biosynthesis; lipid IV(A) from (3R)-3-hydroxytetradecanoyl-[acyl-carrier-protein] and UDP-N-acetyl-alpha-D-glucosamine: step 6/6. Transfers the gamma-phosphate of ATP to the 4'-position of a tetraacyldisaccharide 1-phosphate intermediate (termed DS-1-P) to form tetraacyldisaccharide 1,4'-bis-phosphate (lipid IVA). In Parabacteroides distasonis (strain ATCC 8503 / DSM 20701 / CIP 104284 / JCM 5825 / NCTC 11152), this protein is Tetraacyldisaccharide 4'-kinase.